The following is a 457-amino-acid chain: Heme sensor protein HssS (457 aa).

Helical transmembrane passes span 9–29 and 164–184; these read IAIY…VLTN and TFLA…VIAS. The HAMP domain occupies 186–238; that stretch reads YSIIRPVKKLKLATERLIDGDFETPIKQTRKDEIGTLQYHFNKMRESLGQVDQ. A Histidine kinase domain is found at 246 to 456; it reads NVSHEIKTPL…TFTITLPNNS (211 aa). Histidine 249 carries the phosphohistidine; by autocatalysis modification.

Post-translationally, autophosphorylated.

The protein localises to the cell membrane. The catalysed reaction is ATP + protein L-histidine = ADP + protein N-phospho-L-histidine.. Functionally, member of the two-component regulatory system HssS/HssR involved in intracellular heme homeostasis and tempering of staphylococcal virulence. HssS functions as a heme sensor histidine kinase which is autophosphorylated at a histidine residue and transfers its phosphate group to an aspartate residue of HssR. HssR/HssS activates the expression of hrtAB, an efflux pump, in response to extracellular heme, hemin, hemoglobin or blood. The polypeptide is Heme sensor protein HssS (hssS) (Staphylococcus aureus (strain MSSA476)).